The following is a 286-amino-acid chain: Probable endonuclease 4 (286 aa).

Zn(2+) is bound by residues histidine 67, histidine 107, glutamate 144, aspartate 178, histidine 181, histidine 215, aspartate 228, histidine 230, and glutamate 260.

The protein belongs to the AP endonuclease 2 family. The cofactor is Zn(2+).

The catalysed reaction is Endonucleolytic cleavage to 5'-phosphooligonucleotide end-products.. Endonuclease IV plays a role in DNA repair. It cleaves phosphodiester bonds at apurinic or apyrimidinic (AP) sites, generating a 3'-hydroxyl group and a 5'-terminal sugar phosphate. The polypeptide is Probable endonuclease 4 (Chloroflexus aggregans (strain MD-66 / DSM 9485)).